A 372-amino-acid chain; its full sequence is NAD(P)H-quinone oxidoreductase subunit 1 (372 aa).

The next 8 membrane-spanning stretches (helical) occupy residues 27 to 47 (AIWM…GVLV), 97 to 117 (WLFL…YLIV), 130 to 150 (VGIF…LMAG), 176 to 196 (LALS…IDIV), 204 to 224 (ILGW…IAAL), 254 to 274 (FALF…VFAV), 308 to 328 (SLGI…AILL), and 351 to 371 (VSLV…FAFG).

This sequence belongs to the complex I subunit 1 family. As to quaternary structure, NDH-1 is composed of at least 11 different subunits.

It localises to the cellular thylakoid membrane. It catalyses the reaction a plastoquinone + NADH + (n+1) H(+)(in) = a plastoquinol + NAD(+) + n H(+)(out). The enzyme catalyses a plastoquinone + NADPH + (n+1) H(+)(in) = a plastoquinol + NADP(+) + n H(+)(out). Its function is as follows. NDH-1 shuttles electrons from an unknown electron donor, via FMN and iron-sulfur (Fe-S) centers, to quinones in the respiratory and/or the photosynthetic chain. The immediate electron acceptor for the enzyme in this species is believed to be plastoquinone. Couples the redox reaction to proton translocation, and thus conserves the redox energy in a proton gradient. This is NAD(P)H-quinone oxidoreductase subunit 1 from Microcystis aeruginosa (strain NIES-843 / IAM M-2473).